A 234-amino-acid polypeptide reads, in one-letter code: Gene 53 protein (234 aa).

The chain is Gene 53 protein (53) from Mycobacterium phage L5 (Mycobacteriophage L5).